We begin with the raw amino-acid sequence, 348 residues long: Killer cell immunoglobulin-like receptor 2DL2 (348 aa).

A signal peptide spans 1 to 21 (MSLMVVSMACVGFFLLQGAWP). At 22–245 (HEGVHRKPSL…SKTGNPRHLH (224 aa)) the chain is on the extracellular side. 2 Ig-like C2-type domains span residues 42–107 (EETV…VTHS) and 142–205 (GESV…FRDS). Disulfide bonds link C49/C100 and C149/C198. Residues N84, N178, and N211 are each glycosylated (N-linked (GlcNAc...) asparagine). The helical transmembrane segment at 246 to 264 (ILIGTSVVIILFILLFFLL) threads the bilayer. Over 265 to 348 (HRWCSNKKNA…ESRSKVVSCP (84 aa)) the chain is Cytoplasmic.

This sequence belongs to the immunoglobulin superfamily.

Its subcellular location is the cell membrane. Functionally, receptor on natural killer (NK) cells for HLA-Cw1, 3, 7, and 8 allotypes. Inhibits the activity of NK cells thus preventing cell lysis. The protein is Killer cell immunoglobulin-like receptor 2DL2 of Homo sapiens (Human).